A 132-amino-acid chain; its full sequence is Small ribosomal subunit protein uS8 (132 aa).

This sequence belongs to the universal ribosomal protein uS8 family. Part of the 30S ribosomal subunit. Contacts proteins S5 and S12.

In terms of biological role, one of the primary rRNA binding proteins, it binds directly to 16S rRNA central domain where it helps coordinate assembly of the platform of the 30S subunit. The chain is Small ribosomal subunit protein uS8 from Syntrophotalea carbinolica (strain DSM 2380 / NBRC 103641 / GraBd1) (Pelobacter carbinolicus).